The following is a 506-amino-acid chain: Histidine ammonia-lyase (506 aa).

A cross-link (5-imidazolinone (Ala-Gly)) is located at residues 143–145; that stretch reads ASG. Serine 144 carries the 2,3-didehydroalanine (Ser) modification.

It belongs to the PAL/histidase family. Contains an active site 4-methylidene-imidazol-5-one (MIO), which is formed autocatalytically by cyclization and dehydration of residues Ala-Ser-Gly.

The protein resides in the cytoplasm. The enzyme catalyses L-histidine = trans-urocanate + NH4(+). It functions in the pathway amino-acid degradation; L-histidine degradation into L-glutamate; N-formimidoyl-L-glutamate from L-histidine: step 1/3. The polypeptide is Histidine ammonia-lyase (Salmonella typhimurium (strain LT2 / SGSC1412 / ATCC 700720)).